A 213-amino-acid chain; its full sequence is 5''-phosphoribostamycin phosphatase (213 aa).

The Tele-phosphohistidine intermediate role is filled by His-8. His-155 is a catalytic residue.

The protein belongs to the histidine phosphatase superfamily.

It catalyses the reaction 5''-phosphoribostamycin + H2O = ribostamycin + phosphate. It participates in antibiotic biosynthesis; butirosin biosynthesis. In terms of biological role, catalyzes dephosphorylation of 5''-phosphoribostamycin to generate ribostamycinin the biosynthetic pathway of butirosin. This chain is 5''-phosphoribostamycin phosphatase (btrP), found in Niallia circulans (Bacillus circulans).